We begin with the raw amino-acid sequence, 63 residues long: Large ribosomal subunit protein bL28 (63 aa).

It belongs to the bacterial ribosomal protein bL28 family.

The chain is Large ribosomal subunit protein bL28 from Clostridium beijerinckii (strain ATCC 51743 / NCIMB 8052) (Clostridium acetobutylicum).